We begin with the raw amino-acid sequence, 216 residues long: MRVAIIDYGSGNLRSATKAFERAAHESGISAEIDLTCDAQRVASADRIVLPGVGAYADCRRGLDAVPGMVEALNDTVLKKARPFLGICVGMQLMSERGLEKTVTNGLGWIAGDVREMVPSDASLKIPQIGWNRIHVKHSHPIFDGIPTGDDGLHAYFVHSYMLDAKNASDVLAVTDYGGDVTAAVGRDNMVGTQFHPEKSQLLGLSFIANFLKWKP.

In terms of domain architecture, Glutamine amidotransferase type-1 spans 2–216 (RVAIIDYGSG…FIANFLKWKP (215 aa)). C88 (nucleophile) is an active-site residue. Residues H196 and E198 contribute to the active site.

Heterodimer of HisH and HisF.

The protein resides in the cytoplasm. It catalyses the reaction 5-[(5-phospho-1-deoxy-D-ribulos-1-ylimino)methylamino]-1-(5-phospho-beta-D-ribosyl)imidazole-4-carboxamide + L-glutamine = D-erythro-1-(imidazol-4-yl)glycerol 3-phosphate + 5-amino-1-(5-phospho-beta-D-ribosyl)imidazole-4-carboxamide + L-glutamate + H(+). It carries out the reaction L-glutamine + H2O = L-glutamate + NH4(+). It functions in the pathway amino-acid biosynthesis; L-histidine biosynthesis; L-histidine from 5-phospho-alpha-D-ribose 1-diphosphate: step 5/9. Functionally, IGPS catalyzes the conversion of PRFAR and glutamine to IGP, AICAR and glutamate. The HisH subunit catalyzes the hydrolysis of glutamine to glutamate and ammonia as part of the synthesis of IGP and AICAR. The resulting ammonia molecule is channeled to the active site of HisF. The sequence is that of Imidazole glycerol phosphate synthase subunit HisH from Brucella melitensis biotype 1 (strain ATCC 23456 / CCUG 17765 / NCTC 10094 / 16M).